The following is a 588-amino-acid chain: Mitochondrial tRNA methylthiotransferase CDK5RAP1 (588 aa).

A mitochondrion-targeting transit peptide spans 1-30 (MHPLRCVLQVQRLSAPFTSMCWVLLRTCRA). 2 disordered regions span residues 33 to 53 (SVSS…QKDF) and 70 to 91 (ASVP…YLSG). Positions 99 to 219 (RKVYLETYGC…LPRLLAVVES (121 aa)) constitute an MTTase N-terminal domain. The [4Fe-4S] cluster site is built by Cys108, Cys144, Cys182, Cys257, Cys261, and Cys264. In terms of domain architecture, Radical SAM core spans 243 to 498 (SPSATSAFVS…TVFREEASKA (256 aa)). The 76-residue stretch at 500–575 (KTSVGCSQLV…SQTLKGHILC (76 aa)) folds into the TRAM domain.

Belongs to the methylthiotransferase family. MiaB subfamily. As to quaternary structure, interacts with CDK5R1 (p35 form). CDK5RAP1, CDK5RAP2 and CDK5RAP3 show competitive binding to CDK5R1. Probably forms a complex with CDK5R1 and CDK5. Requires [4Fe-4S] cluster as cofactor. In terms of tissue distribution, expressed in brain, liver, skeletal muscle and heart.

It localises to the mitochondrion. The catalysed reaction is N(6)-dimethylallyladenosine(37) in tRNA + (sulfur carrier)-SH + AH2 + 2 S-adenosyl-L-methionine = 2-methylsulfanyl-N(6)-dimethylallyladenosine(37) in tRNA + (sulfur carrier)-H + 5'-deoxyadenosine + L-methionine + A + S-adenosyl-L-homocysteine + 2 H(+). Methylthiotransferase that catalyzes the conversion of N6-(dimethylallyl)adenosine (i(6)A) to 2-methylthio-N6-(dimethylallyl)adenosine (ms(2)i(6)A) at position 37 (adjacent to the 3'-end of the anticodon) of four mitochondrial DNA-encoded tRNAs (Ser(UCN), Phe, Tyr and Trp). Essential for efficient and highly accurate protein translation by the ribosome. Specifically inhibits CDK5 activation by CDK5R1. Essential for efficient mitochondrial protein synthesis and respiratory chain. The sequence is that of Mitochondrial tRNA methylthiotransferase CDK5RAP1 from Mus musculus (Mouse).